A 298-amino-acid polypeptide reads, in one-letter code: Tritrans,polycis-undecaprenyl-diphosphate synthase (geranylgeranyl-diphosphate specific) (298 aa).

The active site involves Asp-35. Residue Asp-35 participates in Mg(2+) binding. Residues 36–39, Arg-48, His-52, and 80–82 contribute to the substrate site; these read GNRR and STE. The Proton acceptor role is filled by Asn-83. Substrate-binding positions include Phe-84, Arg-86, Arg-208, and 214–216; that span reads RIS.

The protein belongs to the UPP synthase family. Homodimer. Requires Mg(2+) as cofactor.

It carries out the reaction geranylgeranyl diphosphate + 7 isopentenyl diphosphate = tri-trans,hepta-cis-undecaprenyl diphosphate + 7 diphosphate. Its function is as follows. Catalyzes the sequential condensation of isopentenyl diphosphate (IPP) with geranylgeranyl diphosphate (GGPP) to yield (2Z,6Z,10Z,14Z,18Z,22Z,26Z,30E,34E,38E)-undecaprenyl diphosphate (tritrans,heptacis-UPP). It is probably the precursor of glycosyl carrier lipids. The polypeptide is Tritrans,polycis-undecaprenyl-diphosphate synthase (geranylgeranyl-diphosphate specific) (Methanosarcina mazei (strain ATCC BAA-159 / DSM 3647 / Goe1 / Go1 / JCM 11833 / OCM 88) (Methanosarcina frisia)).